The primary structure comprises 866 residues: Leucine--tRNA ligase (866 aa).

The 'HIGH' region signature appears at Pro-42–His-52. Positions Thr-624 to Ser-628 match the 'KMSKS' region motif. Residue Lys-627 participates in ATP binding.

This sequence belongs to the class-I aminoacyl-tRNA synthetase family.

Its subcellular location is the cytoplasm. It carries out the reaction tRNA(Leu) + L-leucine + ATP = L-leucyl-tRNA(Leu) + AMP + diphosphate. This is Leucine--tRNA ligase from Nitrosospira multiformis (strain ATCC 25196 / NCIMB 11849 / C 71).